Here is a 213-residue protein sequence, read N- to C-terminus: Thiamine-phosphate synthase (213 aa).

4-amino-2-methyl-5-(diphosphooxymethyl)pyrimidine contacts are provided by residues 40–44 (QFREK) and N75. Positions 76 and 95 each coordinate Mg(2+). S113 lines the 4-amino-2-methyl-5-(diphosphooxymethyl)pyrimidine pocket. Position 139-141 (139-141 (TPS)) interacts with 2-[(2R,5Z)-2-carboxy-4-methylthiazol-5(2H)-ylidene]ethyl phosphate. K142 serves as a coordination point for 4-amino-2-methyl-5-(diphosphooxymethyl)pyrimidine. Residues G171 and 191 to 192 (IS) each bind 2-[(2R,5Z)-2-carboxy-4-methylthiazol-5(2H)-ylidene]ethyl phosphate.

Belongs to the thiamine-phosphate synthase family. It depends on Mg(2+) as a cofactor.

The enzyme catalyses 2-[(2R,5Z)-2-carboxy-4-methylthiazol-5(2H)-ylidene]ethyl phosphate + 4-amino-2-methyl-5-(diphosphooxymethyl)pyrimidine + 2 H(+) = thiamine phosphate + CO2 + diphosphate. The catalysed reaction is 2-(2-carboxy-4-methylthiazol-5-yl)ethyl phosphate + 4-amino-2-methyl-5-(diphosphooxymethyl)pyrimidine + 2 H(+) = thiamine phosphate + CO2 + diphosphate. It catalyses the reaction 4-methyl-5-(2-phosphooxyethyl)-thiazole + 4-amino-2-methyl-5-(diphosphooxymethyl)pyrimidine + H(+) = thiamine phosphate + diphosphate. It functions in the pathway cofactor biosynthesis; thiamine diphosphate biosynthesis; thiamine phosphate from 4-amino-2-methyl-5-diphosphomethylpyrimidine and 4-methyl-5-(2-phosphoethyl)-thiazole: step 1/1. Condenses 4-methyl-5-(beta-hydroxyethyl)thiazole monophosphate (THZ-P) and 2-methyl-4-amino-5-hydroxymethyl pyrimidine pyrophosphate (HMP-PP) to form thiamine monophosphate (TMP). In Staphylococcus aureus (strain MRSA252), this protein is Thiamine-phosphate synthase.